We begin with the raw amino-acid sequence, 234 residues long: Peptidase E (234 aa).

Residues serine 123, aspartate 138, and histidine 160 each act as charge relay system in the active site.

Belongs to the peptidase S51 family.

Its subcellular location is the cytoplasm. The catalysed reaction is Dipeptidase E catalyzes the hydrolysis of dipeptides Asp-|-Xaa. It does not act on peptides with N-terminal Glu, Asn or Gln, nor does it cleave isoaspartyl peptides.. Functionally, hydrolyzes dipeptides containing N-terminal aspartate residues. May play a role in allowing the cell to use peptide aspartate to spare carbon otherwise required for the synthesis of the aspartate family of amino acids. This chain is Peptidase E, found in Actinobacillus pleuropneumoniae serotype 3 (strain JL03).